Consider the following 386-residue polypeptide: Manganese dependent endoglucanase Eg5A (386 aa).

The signal sequence occupies residues 1-17 (MLKYASIALALATLGVA). The region spanning 18-53 (QQQQWGQCGGIGWTGATTCVAGSVCSVLNPYYSQCI) is the CBM1 domain. The active-site Proton donor is the E209. Catalysis depends on E319, which acts as the Nucleophile. The N-linked (GlcNAc...) asparagine glycan is linked to N324.

The protein belongs to the glycosyl hydrolase 5 (cellulase A) family. It depends on Mn(2+) as a cofactor.

Its subcellular location is the secreted. It catalyses the reaction Endohydrolysis of (1-&gt;4)-beta-D-glucosidic linkages in cellulose, lichenin and cereal beta-D-glucans.. Its function is as follows. Secreted manganese dependent endoglucanase that acts by cleaving the beta-1,4-glucose linkage. Exhibits high activity toward carboxymethyl-cellulose (CMC), barley glucan, and glucomannan. Displays low activity on larminarin and xyloglucan but does not hydrolyze hemicellulose substrates such as birchwood xylan, arabinoxylan, and arabinan. The polypeptide is Manganese dependent endoglucanase Eg5A (Phanerodontia chrysosporium (White-rot fungus)).